Here is a 717-residue protein sequence, read N- to C-terminus: Amino-acid acetyltransferase, mitochondrial (717 aa).

The transit peptide at 1–23 (MFIWTKAPARGLGKASKILPKRD) directs the protein to the mitochondrion. Residues 35-70 (KQFHTATTSVRRSSSSAKERQRAERQQLTRLLKESP) are disordered. Low complexity predominate over residues 39 to 50 (TATTSVRRSSSS). Over residues 51-70 (AKERQRAERQQLTRLLKESP) the composition is skewed to basic and acidic residues. Positions 518–691 (NPSIELADDP…GDVDDAKKRD (174 aa)) constitute an N-acetyltransferase domain.

The protein belongs to the acetyltransferase family.

The protein localises to the mitochondrion. It carries out the reaction L-glutamate + acetyl-CoA = N-acetyl-L-glutamate + CoA + H(+). It participates in amino-acid biosynthesis; L-arginine biosynthesis; N(2)-acetyl-L-ornithine from L-glutamate: step 1/4. N-acetylglutamate synthase involved in arginine biosynthesis. In Pyrenophora tritici-repentis (strain Pt-1C-BFP) (Wheat tan spot fungus), this protein is Amino-acid acetyltransferase, mitochondrial (arg2).